Here is a 267-residue protein sequence, read N- to C-terminus: tRNA pseudouridine synthase A (267 aa).

Aspartate 51 acts as the Nucleophile in catalysis. Substrate is bound at residue tyrosine 109.

This sequence belongs to the tRNA pseudouridine synthase TruA family. In terms of assembly, homodimer.

It carries out the reaction uridine(38/39/40) in tRNA = pseudouridine(38/39/40) in tRNA. In terms of biological role, formation of pseudouridine at positions 38, 39 and 40 in the anticodon stem and loop of transfer RNAs. This chain is tRNA pseudouridine synthase A, found in Staphylococcus aureus (strain USA300).